The sequence spans 332 residues: Putative peptide import ATP-binding protein BMEII0206 (332 aa).

In terms of domain architecture, ABC transporter spans 11 to 261 (LEVSNLSVDF…PLHPYTEGLL (251 aa)). An ATP-binding site is contributed by 47 to 54 (GESGSGKS).

Belongs to the ABC transporter superfamily. The complex is composed of two ATP-binding proteins (BMEII0205 and BMEII0206), two transmembrane proteins (BMEII0207/BMEII0208 and BMEII0209) and a solute-binding protein (BMEII0210).

The protein resides in the cell inner membrane. Probably part of an ABC transporter complex that could be involved in peptide import. Probably responsible for energy coupling to the transport system. In Brucella melitensis biotype 1 (strain ATCC 23456 / CCUG 17765 / NCTC 10094 / 16M), this protein is Putative peptide import ATP-binding protein BMEII0206.